Consider the following 914-residue polypeptide: MATFSDHETSEFLPMTRPRSTSSASQTSSDSGLSSEPAFQEDQKQPFSAPNGTTGMDNGDRYRDLEDGEAEANEPFLASSKKAATGGRARRIFWLLVLLCFGGWLLAFVLFLTGGRANYQSASDALQAQEPESASGSTSSGKPVTLEQVLTGQWSPRYHAITWVAGPNDEDGLLVEKGGGEQEGYLRVDDIQSRKNKDGKGGRVLMRKPIVHVDGKLVVPGNAWPSPDLKKVLLISDQEKNWRHSFTGKYWVLDVESQTAQPLDPSLPDGRVQLALWSPKSDAVIFVRENDVYLRKLSSDRVVTVTKDGGENLFYGVPDWVYEEEVISGRSVTWWSNDAKYVAFFRTNESAVSDFPVDYFLSRPSGKKPDPGLENYPEVRQIKYPKAGASNPVVDLQFYDVEKNEVFSVDVADDFDNDDRIIIEVVWASEGKVLVRSTNRESDILKVFLIDTKSRTGRVVRTEDVASLDGGWVEPSQSTRFIPADPSNGRPDDGYIDTVPYKGYDHLAYFSPLDSPKGVMLTSGDWEVVDAPAAVDLQRGLVYFVAAKEAPTERHIYRVQLDGSNMTAITDTSKPGYFGVSFSHGAGYALLTYNGPSVPWQAIINTHGDEITFEERIEENPQLTSMIEAYALPTEIYQNVTVDGFTLQVVERRPPHFNPAKKYPVLFYLYGGPGSQTVDRKFSIDFQSYVASSLGYIVVTVDGRGTGHIGRKARCIVRGNLGFYEARDQIATAKIWAAKSYVDESRMAIWGWSFGGFMTLKTLELDAGETFQYGMAVAPVTDWRFYDSIYSERYMHTPQHNPSGYANSTITDMAALTHPVRFLVMHGTADDNVHLQNTLVLTDKLDLSNVKNYDLHFFPDSDHSIFFHNAHAMVYDRLSSWLVNAFNGEWHRIAHPVPGESMWTRFKRSLPVLV.

A compositionally biased stretch (basic and acidic residues) spans 1–10; that stretch reads MATFSDHETS. The disordered stretch occupies residues 1-63; sequence MATFSDHETS…TGMDNGDRYR (63 aa). Over 1–91 the chain is Cytoplasmic; the sequence is MATFSDHETS…KAATGGRARR (91 aa). Residues 20–35 show a composition bias toward low complexity; it reads STSSASQTSSDSGLSS. A compositionally biased stretch (polar residues) spans 45 to 56; that stretch reads QPFSAPNGTTGM. The helical; Signal-anchor for type II membrane protein transmembrane segment at 92-112 threads the bilayer; it reads IFWLLVLLCFGGWLLAFVLFL. Residues 113 to 914 lie on the Vacuolar side of the membrane; the sequence is TGGRANYQSA…RFKRSLPVLV (802 aa). N-linked (GlcNAc...) asparagine glycans are attached at residues Asn348, Asn565, and Asn639. The Charge relay system role is filled by Ser753. Asn807 is a glycosylation site (N-linked (GlcNAc...) asparagine). Residues Asp830 and His863 each act as charge relay system in the active site.

Belongs to the peptidase S9B family.

The protein localises to the vacuole membrane. The enzyme catalyses Release of an N-terminal dipeptide, Xaa-Yaa-|-Zaa-, from a polypeptide, preferentially when Yaa is Pro, provided Zaa is neither Pro nor hydroxyproline.. Its function is as follows. Type IV dipeptidyl-peptidase which removes N-terminal dipeptides sequentially from polypeptides having unsubstituted N-termini provided that the penultimate residue is proline. The polypeptide is Probable dipeptidyl-aminopeptidase B (dapB) (Aspergillus clavatus (strain ATCC 1007 / CBS 513.65 / DSM 816 / NCTC 3887 / NRRL 1 / QM 1276 / 107)).